The following is a 346-amino-acid chain: Tripartite motif-containing protein 44 (346 aa).

Residues 68-167 (TPPASGGDDA…ETEAESEFDP (100 aa)) are disordered. Residues 89–167 (EGEVESEVGE…ETEAESEFDP (79 aa)) are compositionally biased toward acidic residues. The B box-type zinc-finger motif lies at 176–217 (VAKRKCPDHGLDLSTYCQEDRQLICVLCPVIGAHRGHQLSTL). Zn(2+) is bound by residues cysteine 181, histidine 184, cysteine 203, and histidine 209. Residues 292-327 (AHVTEILADIQSHMDRLMTQMAQAKEQLDTSNESAE) adopt a coiled-coil conformation. The disordered stretch occupies residues 313–346 (AQAKEQLDTSNESAEPKAEGDEEGPSGASEEEDT). Residues 332 to 346 (GDEEGPSGASEEEDT) show a composition bias toward acidic residues. Serine 338 and serine 341 each carry phosphoserine.

As to quaternary structure, interacts (via coiled coil) with TRIM17 (via coiled coil). In terms of tissue distribution, expressed mainly in brain with high level in cerebral hemispheres and cerebellum. Lower expression in kidney, lung and spleen. In brain is detected in the hippocampus, thalamic and pretectal nuclei, substantia nigra, the dorsal part of the medulla, the cerebellum, in the olfactory nucleus, other cortical areas apart from hippocampus and the striatum. Indeed expression is confined in neuronal somata namely in the CA3 region and dentate gyrus of the hippocampus, caudate-putamen, parabranchial nucleus, olfactory nucleus, cortex, deep cerebellar nuclei and thalamus. Also highly expressed in the spleen. thymus and testis.

Functionally, may play a role in the process of differentiation and maturation of neuronal cells. May regulate the activity of TRIM17. Is a negative regulator of PAX6 expression. The sequence is that of Tripartite motif-containing protein 44 (Trim44) from Mus musculus (Mouse).